The primary structure comprises 140 residues: Austinoid biosynthesis clusters protein S (140 aa).

It belongs to the trt14 isomerase family. As to quaternary structure, homodimer.

It functions in the pathway secondary metabolite biosynthesis; terpenoid biosynthesis. Its function is as follows. Part of the gene cluster B that mediates the biosynthesis of austinol and dehydroaustinol, two fungal meroterpenoids. The first step of the pathway is the synthesis of 3,5-dimethylorsellinic acid by the polyketide synthase ausA. 3,5-dimethylorsellinic acid is then prenylated by the polyprenyl transferase ausN. Further epoxidation by the FAD-dependent monooxygenase ausM and cyclization by the probable terpene cyclase ausL lead to the formation of protoaustinoid A. Protoaustinoid A is then oxidized to spiro-lactone preaustinoid A3 by the combined action of the FAD-binding monooxygenases ausB and ausC, and the dioxygenase ausE. Acid-catalyzed keto-rearrangement and ring contraction of the tetraketide portion of preaustinoid A3 by ausJ lead to the formation of preaustinoid A4. The aldo-keto reductase ausK, with the help of ausH, is involved in the next step by transforming preaustinoid A4 into isoaustinone which is in turn hydroxylated by the P450 monooxygenase ausI to form austinolide. Finally, the cytochrome P450 monooxygenase ausG modifies austinolide to austinol. Austinol can be further modified to dehydroaustinol which forms a diffusible complex with diorcinol that initiates conidiation. Due to genetic rearrangements of the clusters and the subsequent loss of some enzymes, the end products of the Emericella nidulans austinoid biosynthesis clusters are austinol and dehydroaustinol, even if additional enzymes, such as the O-acetyltransferase ausQ and the cytochrome P450 monooxygenase ausR are still functional. AusS is necessary for austinoids production and may play a possible function as a regulator. This is Austinoid biosynthesis clusters protein S from Emericella nidulans (strain FGSC A4 / ATCC 38163 / CBS 112.46 / NRRL 194 / M139) (Aspergillus nidulans).